The following is a 109-amino-acid chain: Thiosulfate sulfurtransferase GlpE (109 aa).

In terms of domain architecture, Rhodanese spans 16 to 104; the sequence is REQGAVVVDI…WRSTYPAETA (89 aa). The active-site Cysteine persulfide intermediate is the Cys64.

It belongs to the GlpE family.

Its subcellular location is the cytoplasm. The catalysed reaction is thiosulfate + hydrogen cyanide = thiocyanate + sulfite + 2 H(+). It carries out the reaction thiosulfate + [thioredoxin]-dithiol = [thioredoxin]-disulfide + hydrogen sulfide + sulfite + 2 H(+). Its function is as follows. Transferase that catalyzes the transfer of sulfur from thiosulfate to thiophilic acceptors such as cyanide or dithiols. May function in a CysM-independent thiosulfate assimilation pathway by catalyzing the conversion of thiosulfate to sulfite, which can then be used for L-cysteine biosynthesis. In Pseudomonas fluorescens (strain ATCC BAA-477 / NRRL B-23932 / Pf-5), this protein is Thiosulfate sulfurtransferase GlpE.